The primary structure comprises 146 residues: 3-dehydroquinate dehydratase (146 aa).

Y23 functions as the Proton acceptor in the catalytic mechanism. Substrate contacts are provided by N74, H80, and D87. The Proton donor role is filled by H100. Residues 101 to 102 (IS) and R111 contribute to the substrate site.

The protein belongs to the type-II 3-dehydroquinase family. In terms of assembly, homododecamer.

It carries out the reaction 3-dehydroquinate = 3-dehydroshikimate + H2O. Its pathway is metabolic intermediate biosynthesis; chorismate biosynthesis; chorismate from D-erythrose 4-phosphate and phosphoenolpyruvate: step 3/7. In terms of biological role, catalyzes a trans-dehydration via an enolate intermediate. The polypeptide is 3-dehydroquinate dehydratase (Bacillus mycoides (strain KBAB4) (Bacillus weihenstephanensis)).